A 122-amino-acid polypeptide reads, in one-letter code: Putative ankyrin repeat protein L22 (122 aa).

4 ANK repeats span residues 3-32 (DNNY…DIKA), 33-62 (DDDY…DIRV), 63-92 (NNDY…NIRA), and 94-122 (DDYA…VLNQ).

The protein is Putative ankyrin repeat protein L22 of Acanthamoeba polyphaga (Amoeba).